Consider the following 155-residue polypeptide: Ribosome maturation factor RimP (155 aa).

The protein belongs to the RimP family.

The protein resides in the cytoplasm. Required for maturation of 30S ribosomal subunits. The protein is Ribosome maturation factor RimP of Deinococcus geothermalis (strain DSM 11300 / CIP 105573 / AG-3a).